A 626-amino-acid polypeptide reads, in one-letter code: Fructose-1,6-bisphosphatase class 3 (626 aa).

It belongs to the FBPase class 3 family. Mn(2+) serves as cofactor.

The enzyme catalyses beta-D-fructose 1,6-bisphosphate + H2O = beta-D-fructose 6-phosphate + phosphate. The protein operates within carbohydrate biosynthesis; gluconeogenesis. This Enterococcus faecalis (strain ATCC 700802 / V583) protein is Fructose-1,6-bisphosphatase class 3.